A 356-amino-acid polypeptide reads, in one-letter code: Carbohydrate sulfotransferase 10 (356 aa).

Topologically, residues 1–6 (MHHQWL) are cytoplasmic. The helical; Signal-anchor for type II membrane protein transmembrane segment at 7 to 27 (LLAACFWVIFMFMVASKFITL) threads the bilayer. Topologically, residues 28-356 (TFKDPDVYSA…GYQKPDFLLN (329 aa)) are lumenal. Residue asparagine 99 is glycosylated (N-linked (GlcNAc...) asparagine). Residues 127–133 (PKVGNTQ) and 189–197 (RDPFERLIS) each bind 3'-phosphoadenylyl sulfate. 2 N-linked (GlcNAc...) asparagine glycosylation sites follow: asparagine 228 and asparagine 316.

It belongs to the sulfotransferase 2 family.

The protein localises to the golgi apparatus membrane. It catalyses the reaction 3-O-{beta-D-GlcA-(1-&gt;[3)-alpha-D-Xyl-(1-&gt;3)-beta-D-GlcA-(1-&gt;](n)-4)-beta-D-Xyl-(1-&gt;4)-Rib-ol-P-Rib-ol-P-3-beta-D-GalNAc-(1-&gt;3)-beta-D-GlcNAc-(1-&gt;4)-O-6-P-alpha-D-Man}-L-Thr-[protein] + 3'-phosphoadenylyl sulfate = 3-O-{O-3-S-beta-D-GlcA-(1-&gt;[3)-alpha-D-Xyl-(1-&gt;3)-beta-D-GlcA-(1-&gt;](n)-4)-beta-D-Xyl-(1-&gt;4)-Rib-ol-P-Rib-ol-P-3-beta-D-GalNAc-(1-&gt;3)-beta-D-GlcNAc-(1-&gt;4)-O-6-P-alpha-D-Man}-L-Thr-[protein] + adenosine 3',5'-bisphosphate + H(+). It carries out the reaction 17beta-estradiol 3-O-(beta-D-glucuronate) + 3'-phosphoadenylyl sulfate = 17beta-estradiol 3-O-(3-sulfo-beta-D-glucuronate) + adenosine 3',5'-bisphosphate + H(+). The catalysed reaction is 17beta-estradiol 3-O-(beta-D-glucuronate) 17-sulfate + 3'-phosphoadenylyl sulfate = 17beta-estradiol 3-O-(3-sulfo-beta-D-glucuronate) 17-sulfate + adenosine 3',5'-bisphosphate + H(+). The enzyme catalyses 17beta-estradiol 17-O-(beta-D-glucuronate) + 3'-phosphoadenylyl sulfate = 17beta-estradiol 17-O-(3-sulfo-beta-D-glucuronate) + adenosine 3',5'-bisphosphate + H(+). It catalyses the reaction 16alpha,17beta-estriol 3-O-(beta-D-glucuronate) + 3'-phosphoadenylyl sulfate = 16alpha,17beta-estriol 3-O-(3-sulfo-beta-D-glucuronate) + adenosine 3',5'-bisphosphate + H(+). It carries out the reaction 16alpha,17beta-estriol 16-O-(beta-D-glucuronate) + 3'-phosphoadenylyl sulfate = 16alpha,17beta-estriol 16-O-(3-sulfo-beta-D-glucuronate) + adenosine 3',5'-bisphosphate + H(+). The catalysed reaction is 16alpha,17beta-estriol 17-O-(beta-D-glucuronate) + 3'-phosphoadenylyl sulfate = 16alpha,17beta-estriol 17-O-(3-sulfo-beta-D-glucuronate) + adenosine 3',5'-bisphosphate + H(+). The enzyme catalyses estrone 3-O-(beta-D-glucuronate) + 3'-phosphoadenylyl sulfate = estrone 3-O-(3-sulfo-beta-D-glucuronate) + adenosine 3',5'-bisphosphate + H(+). It catalyses the reaction 3alpha,20alpha-dihydroxy-5beta-pregnane 3-O-(beta-D-glucuronate) + 3'-phosphoadenylyl sulfate = 3alpha,20alpha-dihydroxy-5beta-pregnane 3-O-(3-sulfo-beta-D-glucuronate) + adenosine 3',5'-bisphosphate + H(+). It carries out the reaction testosterone 17-O-(beta-D-glucuronate) + 3'-phosphoadenylyl sulfate = testosterone 17-O-(3-sulfo-beta-D-glucuronate) + adenosine 3',5'-bisphosphate + H(+). The catalysed reaction is 3beta-androst-5-en-17-one 3-O-(beta-D-glucuronate) + 3'-phosphoadenylyl sulfate = 3beta-androst-5-en-17-one 3-O-(3-sulfo-beta-D-glucuronate) + adenosine 3',5'-bisphosphate + H(+). The enzyme catalyses 3alpha,17alpha-dihydroxy-5beta-androstane-11-one-17beta-carboxylate 3-O-(beta-D-glucuronate) + 3'-phosphoadenylyl sulfate = 3alpha,17alpha-dihydroxy-5beta-androstane-11-one-17beta-carboxylate 3-O-(3-sulfo-beta-D-glucuronate) + adenosine 3',5'-bisphosphate + H(+). It catalyses the reaction 3alpha-hydroxyetiocholan-17-one 3-O-(beta-D-glucuronate) + 3'-phosphoadenylyl sulfate = 3alpha-hydroxyetiocholan-17-one 3-O-(3-sulfo-beta-D-glucuronate) + adenosine 3',5'-bisphosphate + H(+). It participates in steroid metabolism. Its pathway is protein modification; carbohydrate sulfation. Catalyzes the transfer of sulfate from 3'-phosphoadenylyl sulfate (PAPS) to position 3 of terminal glucuronic acid of both protein- and lipid-linked oligosaccharides. Participates in biosynthesis of HNK-1 carbohydrate structure 3-O-sulfo-beta-D-GlcA-(1-&gt;3)-beta-D-Gal-(1-&gt;4)-D-GlcNAc-R, a sulfated glucuronyl-lactosaminyl residue carried by many neural recognition molecules, which is involved in cell interactions during ontogenetic development and in synaptic plasticity in the adult. May be indirectly involved in synapse plasticity of the hippocampus, via its role in HNK-1 biosynthesis. Sulfates terminal glucuronyl residue of the laminin globular (LG)-domain binding epitope on DAG1/alpha-dystroglycan and prevents further polymerization by LARGE1 glycosyltransferase. Likely defines the chain length of LG epitope, conferring binding specificity to extracellular matrix components. Plays a role in down-regulating the steroid hormones. Sulfates glucuronidated estrogens and androgens with an impact in hormone cycle and fertility. Has a preference for glucuronyl moiety at the 3-hydroxyl group of a sterol ring rather than the 17-hydroxyl group, showing high catalytic efficiency for 17beta-estradiol 3-O-(beta-D-glucuronate) and dehydroepiandrosterone 3-O-(beta-D-glucuronate) hormones. This is Carbohydrate sulfotransferase 10 (CHST10) from Pongo abelii (Sumatran orangutan).